Here is a 145-residue protein sequence, read N- to C-terminus: Methylglyoxal synthase (145 aa).

Residues 1–145 (MNSKKKIALV…YYQKIRKDNF (145 aa)) enclose the MGS-like domain. Substrate contacts are provided by residues H12, K16, 38-41 (TGTT), and 58-59 (SG). D64 functions as the Proton donor/acceptor in the catalytic mechanism. A substrate-binding site is contributed by H91.

This sequence belongs to the methylglyoxal synthase family.

It carries out the reaction dihydroxyacetone phosphate = methylglyoxal + phosphate. Its function is as follows. Catalyzes the formation of methylglyoxal from dihydroxyacetone phosphate. This chain is Methylglyoxal synthase, found in Clostridium acetobutylicum (strain ATCC 824 / DSM 792 / JCM 1419 / IAM 19013 / LMG 5710 / NBRC 13948 / NRRL B-527 / VKM B-1787 / 2291 / W).